Reading from the N-terminus, the 138-residue chain is uncharacterized protein (138 aa).

3 helical membrane-spanning segments follow: residues 17-37 (IVVS…TIYF), 43-63 (FTVV…LLVC), and 117-137 (FWWM…LVSL).

The protein localises to the cell membrane. This is an uncharacterized protein from Mycoplasma genitalium (strain ATCC 33530 / DSM 19775 / NCTC 10195 / G37) (Mycoplasmoides genitalium).